Here is a 215-residue protein sequence, read N- to C-terminus: MIVGVVLAKNAQKAVEKIKSGEADLYEVRLDHFSSFDGLEELEPFAPNLIFTFRSYEEGGRREASDEERLRVYKRVLELYPAYVDVGLNSGIAERVVKEAREKRVGVVLSYHNFEETPDFWELLGVVKAMEALEPDVMKIVTMARSLGDNLRIARLYEGRENVVAFCMGSLGRLSRLISALLAPFTYASLDEEAAPGQLTVEELRRAIEVVGDGR.

3-dehydroquinate-binding positions include 27–29 (EVR) and Arg54. His112 serves as the catalytic Proton donor/acceptor. Lys139 (schiff-base intermediate with substrate) is an active-site residue. 2 residues coordinate 3-dehydroquinate: Arg176 and Gln198.

The protein belongs to the type-I 3-dehydroquinase family. As to quaternary structure, homodimer.

It catalyses the reaction 3-dehydroquinate = 3-dehydroshikimate + H2O. It participates in metabolic intermediate biosynthesis; chorismate biosynthesis; chorismate from D-erythrose 4-phosphate and phosphoenolpyruvate: step 3/7. Functionally, involved in the third step of the chorismate pathway, which leads to the biosynthesis of aromatic amino acids. Catalyzes the cis-dehydration of 3-dehydroquinate (DHQ) and introduces the first double bond of the aromatic ring to yield 3-dehydroshikimate. The polypeptide is 3-dehydroquinate dehydratase (Thermococcus onnurineus (strain NA1)).